Here is a 77-residue protein sequence, read N- to C-terminus: U8-lycotoxin-Ls1m (77 aa).

The signal sequence occupies residues 1-20 (MKLIIFTGLVLFSIVSLIEA). Positions 21–26 (QAENEK) are excised as a propeptide.

It belongs to the neurotoxin 19 (CSTX) family. 08 (U8-Lctx) subfamily. In terms of processing, contains 4 disulfide bonds. In terms of tissue distribution, expressed by the venom gland.

It is found in the secreted. The chain is U8-lycotoxin-Ls1m from Lycosa singoriensis (Wolf spider).